A 1615-amino-acid chain; its full sequence is ABC transporter A family member 4 (1615 aa).

7 consecutive transmembrane segments (helical) span residues 30–50 (ILLPLISIGILFGILYLSMII), 233–253 (GVFITASLFATLFTLITNIVI), 278–298 (SIISLITLLSSTLLVSIILSA), 308–328 (ITLILILIPYSITLLLIAFIL), 337–357 (YAGLMAFLIVLLLSGIGIIIG), 365–385 (LKLLSCLFSPIAISVANYVWC), and 405–425 (YEIIGMLVFDIFLYILILWYL). Residues 182–383 (TQIQTGVDQA…PIAISVANYV (202 aa)) form the ABC transmembrane type-2 domain. In terms of domain architecture, ABC transporter 1 spans 492–727 (ISIRNLRKEF…FGVGYLLTIS (236 aa)). 528-535 (GPNGSGKS) lines the ATP pocket. Transmembrane regions (helical) follow at residues 855-875 (IKSFVLSILIPILILAGGLIL), 1022-1042 (FVAIVFFIILTLASFSLIAAS), 1075-1095 (IWDYLQTFILVIFLTIVIIAV), 1106-1126 (YISGVVLFTFSIIPLSYLMSF), 1135-1155 (VGAIFAIHFGVGLIFTVISFI), 1174-1194 (IIEYCFYAISPFFCFSKILAI), and 1218-1238 (LLPNAILFLHCIVWITWILLI). Positions 1293–1528 (IIFNNLYKKF…FGSGYSIEVK (236 aa)) constitute an ABC transporter 2 domain. 1331 to 1338 (GLNGCGKS) is a binding site for ATP.

The protein belongs to the ABC transporter superfamily. ABCA family.

The protein localises to the membrane. The sequence is that of ABC transporter A family member 4 (abcA4) from Dictyostelium discoideum (Social amoeba).